The primary structure comprises 209 residues: Imidazole glycerol phosphate synthase subunit HisH (209 aa).

The Glutamine amidotransferase type-1 domain maps to 4–209; the sequence is PVVVFEYGSG…RLLANWIGSL (206 aa). The active-site Nucleophile is cysteine 82. Active-site residues include histidine 190 and glutamate 192.

In terms of assembly, heterodimer of HisH and HisF.

The protein localises to the cytoplasm. It catalyses the reaction 5-[(5-phospho-1-deoxy-D-ribulos-1-ylimino)methylamino]-1-(5-phospho-beta-D-ribosyl)imidazole-4-carboxamide + L-glutamine = D-erythro-1-(imidazol-4-yl)glycerol 3-phosphate + 5-amino-1-(5-phospho-beta-D-ribosyl)imidazole-4-carboxamide + L-glutamate + H(+). It carries out the reaction L-glutamine + H2O = L-glutamate + NH4(+). The protein operates within amino-acid biosynthesis; L-histidine biosynthesis; L-histidine from 5-phospho-alpha-D-ribose 1-diphosphate: step 5/9. IGPS catalyzes the conversion of PRFAR and glutamine to IGP, AICAR and glutamate. The HisH subunit catalyzes the hydrolysis of glutamine to glutamate and ammonia as part of the synthesis of IGP and AICAR. The resulting ammonia molecule is channeled to the active site of HisF. This chain is Imidazole glycerol phosphate synthase subunit HisH, found in Leifsonia xyli subsp. xyli (strain CTCB07).